Consider the following 103-residue polypeptide: Histone H4.2 (103 aa).

Positions 1–14 (MTGRGKGGKGLGKG) are enriched in gly residues. The segment at 1–20 (MTGRGKGGKGLGKGGAKRHR) is disordered. The residue at position 6 (lysine 6) is an N6-acetyl-N6-methyllysine; alternate. N6-methyllysine; alternate is present on residues lysine 6, lysine 9, and lysine 13. Lysine 13 is subject to N6-acetyl-N6-methyllysine; alternate. A DNA-binding region spans residues 17-21 (KRHRK). N6-glutaryllysine is present on lysine 92.

Belongs to the histone H4 family. In terms of assembly, the nucleosome is a histone octamer containing two molecules each of H2A, H2B, H3 and H4 assembled in one H3-H4 heterotetramer and two H2A-H2B heterodimers. The octamer wraps approximately 147 bp of DNA. Glutarylation at Lys-92 (H4K91glu) destabilizes nucleosomes by promoting dissociation of the H2A-H2B dimers from nucleosomes.

It is found in the nucleus. Its subcellular location is the chromosome. Its function is as follows. Core component of nucleosome. Nucleosomes wrap and compact DNA into chromatin, limiting DNA accessibility to the cellular machineries which require DNA as a template. Histones thereby play a central role in transcription regulation, DNA repair, DNA replication and chromosomal stability. DNA accessibility is regulated via a complex set of post-translational modifications of histones, also called histone code, and nucleosome remodeling. The protein is Histone H4.2 (H4.2) of Talaromyces funiculosus (Fruitlet core rot fungus).